We begin with the raw amino-acid sequence, 174 residues long: V-type proton ATPase catalytic subunit A (174 aa).

This sequence belongs to the ATPase alpha/beta chains family. As to quaternary structure, V-ATPase is a heteromultimeric enzyme made up of two complexes: the ATP-hydrolytic V1 complex and the proton translocation V0 complex. The V1 complex consists of three catalytic AB heterodimers that form a heterohexamer, three peripheral stalks each consisting of EG heterodimers, one central rotor including subunits D and F, and the regulatory subunits C and H. The proton translocation complex V0 consists of the proton transport subunit a, a ring of proteolipid subunits c9c'', rotary subunit d, subunits e and f, and the accessory subunits ATP6AP1/Ac45 and ATP6AP2/PRR. Interacts with the V0 complex V-ATPase subunit a4 ATP6V0A4. Interacts with WFS1. Interacts with alpha-crystallin B chain/CRYAB and with MTOR, forming a ternary complex.

Its subcellular location is the cytoplasm. It is found in the cytosol. The protein localises to the cytoplasmic vesicle. It localises to the secretory vesicle. The protein resides in the clathrin-coated vesicle membrane. Its subcellular location is the lysosome. The enzyme catalyses ATP + H2O + 4 H(+)(in) = ADP + phosphate + 5 H(+)(out). With respect to regulation, ATP hydrolysis occurs at the interface between the nucleotide-binding domains of subunits A and B. ATP hydrolysis triggers a conformational change in the subunits D and F, which induces a shift of subunit d. The c-ring is subsequently rotated and results in a continuous proton translocation across the membrane. In terms of biological role, catalytic subunit of the V1 complex of vacuolar(H+)-ATPase (V-ATPase), a multisubunit enzyme composed of a peripheral complex (V1) that hydrolyzes ATP and a membrane integral complex (V0) that translocates protons. V-ATPase is responsible for acidifying and maintaining the pH of intracellular compartments and in some cell types, is targeted to the plasma membrane, where it is responsible for acidifying the extracellular environment. In aerobic conditions, involved in intracellular iron homeostasis, thus triggering the activity of Fe(2+) prolyl hydroxylase (PHD) enzymes, and leading to HIF1A hydroxylation and subsequent proteasomal degradation. May play a role in neurite development and synaptic connectivity. The chain is V-type proton ATPase catalytic subunit A from Mesocricetus auratus (Golden hamster).